Here is a 376-residue protein sequence, read N- to C-terminus: Proteasome-interacting protein CIC1 (376 aa).

Disordered regions lie at residues 1–29 (MAKK…KKSS) and 356–376 (RSSS…KAKS). The tract at residues 310–376 (ETHEDDMVTI…ESEAVKKAKS (67 aa)) is required for interaction with CDC4. Basic and acidic residues predominate over residues 357–376 (SSSELEKESSESEAVKKAKS).

Interacts with CDC4, PRE4, PRE6, RPT1 and SCL1 as part of the fully assembled 26S proteasome. Interacts with pre-ribosomal particles constituent NOP7.

Its subcellular location is the nucleus. It is found in the nucleolus. Its function is as follows. An adapter protein that specifically links the 26S proteasome to its substrate CDC4 which is one of the substrate recognition subunits of the SCF E3 ubiquitin ligase complex. Required for turnover of cell cycle regulatory proteins CDC4 and GRR1. Required for synthesis and nuclear export of 60S ribosomal subunits. Required for vegetative growth. This chain is Proteasome-interacting protein CIC1 (CIC1), found in Saccharomyces cerevisiae (strain ATCC 204508 / S288c) (Baker's yeast).